We begin with the raw amino-acid sequence, 239 residues long: MSGGYAAERQLVADACRVAAARGLSDGFLGHVSLRIDEERLLIRCRGPQERGLAWTTAADVHLVDQGGAPGAPGELDGWSPPNELPLHVEVLRSRPEAASVVHVHPRAVVAADLAGLAIRPIVGAFDIPGAKLAAGGVPVYPRGVLVRNRGLALEMVAAMGKRPVVVLRGHGLTSSGGSVQEAVLRAISVDSLARLSLQIAAAGGAQADLPAEDLAALPDLGPGFNEGVAWRHEVARMG.

E84 acts as the Proton donor/acceptor in catalysis. The a divalent metal cation site is built by E84, H103, H105, and H171.

It belongs to the aldolase class II family. Requires a divalent metal cation as cofactor.

The enzyme catalyses 3,4-dihydroxyphthalate + H(+) = 3,4-dihydroxybenzoate + CO2. It participates in xenobiotic degradation; phthalate degradation. In terms of biological role, catalyzes the decarboxylation of 3,4-dihydroxyphthalate to protocatechuate (3,4-dihydroxybenzoate) during phthalate metabolism. The protein is 3,4-dihydroxyphthalate decarboxylase of Terrabacter sp. (strain DBF63).